Reading from the N-terminus, the 398-residue chain is Acetate kinase (398 aa).

Residue Asn-8 participates in Mg(2+) binding. Lys-15 serves as a coordination point for ATP. Arg-89 is a binding site for substrate. Residue Asp-146 is the Proton donor/acceptor of the active site. Residues 206–210 (HIGNG), 281–283 (DLR), and 329–333 (GVGEN) contribute to the ATP site. Residue Glu-383 coordinates Mg(2+).

Belongs to the acetokinase family. Homodimer. It depends on Mg(2+) as a cofactor. Requires Mn(2+) as cofactor.

The protein localises to the cytoplasm. It carries out the reaction acetate + ATP = acetyl phosphate + ADP. Its pathway is metabolic intermediate biosynthesis; acetyl-CoA biosynthesis; acetyl-CoA from acetate: step 1/2. Functionally, catalyzes the formation of acetyl phosphate from acetate and ATP. Can also catalyze the reverse reaction. The chain is Acetate kinase from Macrococcus caseolyticus (strain JCSC5402) (Macrococcoides caseolyticum).